The following is a 650-amino-acid chain: Acetyl-coenzyme A synthetase (650 aa).

Residues 191–194 (RGGR), Thr-311, and Asn-335 each bind CoA. Residues 387 to 389 (GEP), 411 to 416 (DTWWQT), Asp-500, and Arg-515 each bind ATP. CoA is bound at residue Ser-523. ATP is bound at residue Arg-526. Positions 537, 539, and 542 each coordinate Mg(2+). Arg-584 lines the CoA pocket. The residue at position 609 (Lys-609) is an N6-acetyllysine.

It belongs to the ATP-dependent AMP-binding enzyme family. Mg(2+) is required as a cofactor. Post-translationally, acetylated. Deacetylation by the SIR2-homolog deacetylase activates the enzyme.

The enzyme catalyses acetate + ATP + CoA = acetyl-CoA + AMP + diphosphate. Its function is as follows. Catalyzes the conversion of acetate into acetyl-CoA (AcCoA), an essential intermediate at the junction of anabolic and catabolic pathways. AcsA undergoes a two-step reaction. In the first half reaction, AcsA combines acetate with ATP to form acetyl-adenylate (AcAMP) intermediate. In the second half reaction, it can then transfer the acetyl group from AcAMP to the sulfhydryl group of CoA, forming the product AcCoA. The polypeptide is Acetyl-coenzyme A synthetase (Shewanella oneidensis (strain ATCC 700550 / JCM 31522 / CIP 106686 / LMG 19005 / NCIMB 14063 / MR-1)).